A 250-amino-acid chain; its full sequence is Zinc finger protein lsy-27 (250 aa).

C2H2-type zinc fingers lie at residues 25 to 48 and 52 to 75; these read FVCS…QLMH and HTCM…RNEH. Residues 81–104 form a C2H2-type 3; degenerate zinc finger; the sequence is FTCGCCNWTFASKRQLTEHTKCIQ. Disordered stretches follow at residues 126–177 and 226–250; these read IQST…EAER and QKVK…QEIE. The segment covering 148–165 has biased composition (low complexity); the sequence is SLSPSSSVSTSISSRDAS. Residues 239–250 are compositionally biased toward basic and acidic residues; the sequence is MIPEKHVKQEIE.

Functionally, involved in regulating left/right asymmetric differentiation of the gustatory ASE neurons. Plays a role in modulating expression of LIM/homeobox protein lim-6. The sequence is that of Zinc finger protein lsy-27 from Caenorhabditis elegans.